The primary structure comprises 310 residues: Transcription initiation factor TFIID subunit 8 (310 aa).

Residues 1 to 30 form a disordered region; that stretch reads MADAAATAGAGGSGTRSGSKQSTNPADNYH. The residue at position 2 (alanine 2) is an N-acetylalanine. The 68-residue stretch at 35-102 folds into the Histone-fold; involved in forming hexamer structure in TFIID complex domain; that stretch reads RTLQVVVSSL…IVVTLVEMGF (68 aa). A Phosphothreonine modification is found at threonine 130. Residues 262–310 form a disordered region; it reads DSGAEKENTSVLQQNPSLSGSRNGEENIIDNPYLRPVKKPKIRRKKSLS. The segment covering 270–283 has biased composition (polar residues); the sequence is TSVLQQNPSLSGSR. Residue serine 271 is modified to Phosphoserine. Residues 294 to 307 carry the Nuclear localization signal motif; that stretch reads YLRPVKKPKIRRKK. Residues 297–310 show a composition bias toward basic residues; it reads PVKKPKIRRKKSLS.

This sequence belongs to the TAF8 family. Component of the TFIID basal transcription factor complex, composed of TATA-box-binding protein TBP, and a number of TBP-associated factors (TAFs), including TAF1, TAF2, TAF3, TAF4, TAF5, TAF6, TAF7, TAF8, TAF9, TAF10, TAF11, TAF12 and TAF13. Interacts with TBP, TAF1, TAF6, TAF10, TAF11 and TAF13. Component also of a small TAF complex (SMAT) containing TAF8, TAF10 and SUPT7L. Forms a heterodimer with TAF10. Interaction with TAF10 is mediated mainly via its histone fold domain while interaction with SUPT7L is via its C-terminal region.

It localises to the nucleus. The protein localises to the cytoplasm. Its function is as follows. The TFIID basal transcription factor complex plays a major role in the initiation of RNA polymerase II (Pol II)-dependent transcription. TFIID recognizes and binds promoters with or without a TATA box via its subunit TBP, a TATA-box-binding protein, and promotes assembly of the pre-initiation complex (PIC). The TFIID complex consists of TBP and TBP-associated factors (TAFs), including TAF1, TAF2, TAF3, TAF4, TAF5, TAF6, TAF7, TAF8, TAF9, TAF10, TAF11, TAF12 and TAF13. The TFIID complex structure can be divided into 3 modules TFIID-A, TFIID-B, and TFIID-C. TAF8 is involved in forming the TFIID-B module, together with TAF5. Mediates both basal and activator-dependent transcription. Plays a role in the differentiation of preadipocyte fibroblasts to adipocytes, however, does not seem to play a role in differentiation of myoblasts. Required for the integration of TAF10 in the TAF complex. May be important for survival of cells of the inner cell mass which constitute the pluripotent cell population of the early embryo. This is Transcription initiation factor TFIID subunit 8 (TAF8) from Homo sapiens (Human).